The sequence spans 607 residues: Translation initiation factor IF-2 (607 aa).

The tract at residues 54–93 is disordered; it reads SAPQAQDSTPVAETPAAAQPAAPQAASSQPAAAQAAQAVA. Over residues 62–93 the composition is skewed to low complexity; sequence TPVAETPAAAQPAAPQAASSQPAAAQAAQAVA. In terms of domain architecture, tr-type G spans 108–281; the sequence is HRAPVVTIMG…ELEDLRADPK (174 aa). The segment at 117-124 is G1; it reads GHVDHGKT. Residue 117-124 participates in GTP binding; the sequence is GHVDHGKT. The G2 stretch occupies residues 142–146; that stretch reads GITQH. The segment at 163 to 166 is G3; sequence DTPG. GTP is bound by residues 163–167 and 217–220; these read DTPGH and NKVD. A G4 region spans residues 217–220; the sequence is NKVD. The G5 stretch occupies residues 253-255; sequence SAK.

It belongs to the TRAFAC class translation factor GTPase superfamily. Classic translation factor GTPase family. IF-2 subfamily.

It localises to the cytoplasm. Functionally, one of the essential components for the initiation of protein synthesis. Protects formylmethionyl-tRNA from spontaneous hydrolysis and promotes its binding to the 30S ribosomal subunits. Also involved in the hydrolysis of GTP during the formation of the 70S ribosomal complex. This is Translation initiation factor IF-2 from Deinococcus deserti (strain DSM 17065 / CIP 109153 / LMG 22923 / VCD115).